The following is a 334-amino-acid chain: Probable tRNA pseudouridine synthase B (334 aa).

The Nucleophile role is filled by D82. Residues 250-325 (LPKVWIRDSA…IAVDVDKVFM (76 aa)) form the PUA domain.

This sequence belongs to the pseudouridine synthase TruB family. Type 2 subfamily.

It carries out the reaction uridine(55) in tRNA = pseudouridine(55) in tRNA. Could be responsible for synthesis of pseudouridine from uracil-55 in the psi GC loop of transfer RNAs. The chain is Probable tRNA pseudouridine synthase B from Thermococcus onnurineus (strain NA1).